The primary structure comprises 281 residues: MKIPFTKYQGLGNDFILIDNRHSPEPLITAEMAVAMCDRHFGIGADGVIFALPGQAETDYTMRIFNSDGSEPEMCGNGIRCLAQFIARLEANNAIGRTYRIHTLAGTIIPRLEANEQVTVDMGPPQLLGSEIPTTLVKGSEKVLAVPLEVEGKDWLVTCVSMGNPHCVTFVGDLASIPLETIGPKFEHHPVFPQRTNVEFVEVIAPDYMKMRVWERGAGITLACGTGACAVVVAALLTGKCDRRCTVELPGGCLQIHWSQTDNRVYMTGPAKAVFEGIYPI.

Positions 13 and 66 each coordinate substrate. The Proton donor role is filled by Cys75. Residues 76–77, Asn164, Asn197, and 215–216 each bind substrate; these read GN and ER. Cys224 serves as the catalytic Proton acceptor. 225–226 serves as a coordination point for substrate; the sequence is GT.

It belongs to the diaminopimelate epimerase family. As to quaternary structure, homodimer.

Its subcellular location is the cytoplasm. It carries out the reaction (2S,6S)-2,6-diaminopimelate = meso-2,6-diaminopimelate. It functions in the pathway amino-acid biosynthesis; L-lysine biosynthesis via DAP pathway; DL-2,6-diaminopimelate from LL-2,6-diaminopimelate: step 1/1. Catalyzes the stereoinversion of LL-2,6-diaminopimelate (L,L-DAP) to meso-diaminopimelate (meso-DAP), a precursor of L-lysine and an essential component of the bacterial peptidoglycan. This Microcystis aeruginosa (strain NIES-843 / IAM M-2473) protein is Diaminopimelate epimerase.